The following is a 255-amino-acid chain: Zinc import ATP-binding protein ZnuC 1 (255 aa).

The region spanning 7–220 (IRLQDVTVKI…PAFINLFGTQ (214 aa)) is the ABC transporter domain. Residue 39–46 (GPNGAGKS) participates in ATP binding. Positions 229-255 (HHHHDHHHHTDGTVAAGSECSHGDQHA) are disordered.

Belongs to the ABC transporter superfamily. Zinc importer (TC 3.A.1.15.5) family. In terms of assembly, the complex is composed of two ATP-binding proteins (ZnuC), two transmembrane proteins (ZnuB) and a solute-binding protein (ZnuA).

The protein resides in the cell inner membrane. It carries out the reaction Zn(2+)(out) + ATP(in) + H2O(in) = Zn(2+)(in) + ADP(in) + phosphate(in) + H(+)(in). Part of the ABC transporter complex ZnuABC involved in zinc import. Responsible for energy coupling to the transport system. This Hahella chejuensis (strain KCTC 2396) protein is Zinc import ATP-binding protein ZnuC 1.